Consider the following 518-residue polypeptide: Glutamate--cysteine ligase (518 aa).

The protein belongs to the glutamate--cysteine ligase type 1 family. Type 1 subfamily.

It catalyses the reaction L-cysteine + L-glutamate + ATP = gamma-L-glutamyl-L-cysteine + ADP + phosphate + H(+). It participates in sulfur metabolism; glutathione biosynthesis; glutathione from L-cysteine and L-glutamate: step 1/2. This Salmonella paratyphi C (strain RKS4594) protein is Glutamate--cysteine ligase.